We begin with the raw amino-acid sequence, 2362 residues long: Filaggrin-2 (2362 aa).

The segment at 1–81 (MAYLLRSVVT…TEFILMIFKL (81 aa)) is S-100-like. EF-hand domains lie at 8–43 (VVTIIDVFYKYTKQDEECGTLSKDELKELLEKEFRP) and 49–84 (DDPDTVDVIMHMLDRDHDRRLDFTEFILMIFKLALA). Residues Asp-62, Asp-64, Asp-66, Arg-68, and Glu-73 each coordinate Ca(2+). 2 disordered regions span residues 96-238 (ASGS…GLSC) and 284-2109 (GCCR…SSIP). The segment covering 111-120 (EESETEEEEE) has biased composition (acidic residues). 2 stretches are compositionally biased toward basic and acidic residues: residues 159–174 (KRLERQDELSSSEESR) and 189–214 (NKEKDGSRSEELGEKGDKSYDSPSRE). Filaggrin repeat units follow at residues 261–308 (GYNT…NQSC) and 373–414 (HSSC…SNGF). Polar residues-rich tracts occupy residues 284 to 317 (GCCRPKNASSSCQASRSQGQGNQSCRTQSNCQSG), 342 to 375 (SCSQSSSQRGYGSKQCGQPQNCGRQQRMGSSHSS), and 383 to 395 (GATQSSGCGQQRM). Low complexity predominate over residues 396 to 411 (SSCGHSSSSHQKGCSS). Polar residues-rich tracts occupy residues 421 to 443 (ASGSGHSSCCEQHGTNSSQSSGF) and 450 to 469 (SGQSCCGQHGTASSQSSGYS). Low complexity-rich tracts occupy residues 474–519 (GSGQ…QSSG), 539–550 (GSRQSSGSEQHG), and 567–580 (SQSSSSGHHGSGSQ). The stretch at 555–607 (QSSGSGKHETGPSQSSSSGHHGSGSQQHGGGSGQSTGFGEHESSSGHSSSSGQ) is one Filaggrin 3 repeat. Gly residues predominate over residues 581–590 (QHGGGSGQST). Residues 599–618 (SGHSSSSGQHRSGSRHSSGS) show a composition bias toward low complexity. The segment covering 632–653 (GHHGSGSQQHGGGSGNSTGFGE) has biased composition (gly residues). Low complexity predominate over residues 654 to 675 (HGSSSHPLPSSGQNESSSGQSS). Residues 672-723 (GQSSRSERHGTGSGQSSGFGQHGSGSHQSSSSGHNEYGSGQTSSSWPHGKGS) form a Filaggrin 4 repeat. Over residues 682-694 (TGSGQSSGFGQHG) the composition is skewed to gly residues. Composition is skewed to low complexity over residues 695–705 (SGSHQSSSSGH), 728–754 (GYGEQESGHGQSSSSWQHGTGPGQSSS), and 780–798 (GYGEQEAGHGQSSSSWQHG). Gly residues predominate over residues 826-838 (TGSGQSLGFGQHG). The span at 846–864 (SSGHYESVSEPSSSSWQHG) shows a compositional bias: low complexity. Residues 880–927 (HGQSSSAWNHGNESGQSNGYGEHESGHGQSSSAWNHGNESGQSNGFGE) form a Filaggrin 5 repeat. Composition is skewed to polar residues over residues 886-896 (AWNHGNESGQS) and 912-925 (AWNHGNESGQSNGF). Residues 973–982 (ESSEGEEHSV) show a composition bias toward basic and acidic residues. The stretch at 984 to 1035 (PRRYSGYGHGQGQAGHQQRESGYGQRGRPQGPSQDSSRQPQAGHGQPSQSGY) is one Filaggrin 6 repeat. Polar residues predominate over residues 1014–1035 (GPSQDSSRQPQAGHGQPSQSGY). Residues 1047-1059 (EYSEGEAHSEVSQ) are compositionally biased toward basic and acidic residues. Residues 1067–1077 (CHCHCHGQARH) are compositionally biased toward basic residues. Residues 1104 to 1121 (GPGQPSQSGSRRSPRSQP) are compositionally biased toward low complexity. A compositionally biased stretch (gly residues) spans 1142-1152 (SGHGHGQGQGQ). Over residues 1162-1174 (HGQQGRPQGPSQD) the composition is skewed to polar residues. A Filaggrin 7 repeat occupies 1165-1210 (QGRPQGPSQDSSRQPQAGQGQPSQSGSGRSPRRSPVHPESSEGEEH). Positions 1175-1193 (SSRQPQAGQGQPSQSGSGR) are enriched in low complexity. Phosphoserine is present on residues Ser-1198, Ser-1204, and Ser-1205. Over residues 1220–1232 (SGHGHGQGQGQGQ) the composition is skewed to gly residues. Residues 1255-1273 (SSRQPQAGQGQPSQSGSGR) are compositionally biased toward low complexity. Ser-1278, Ser-1284, and Ser-1285 each carry phosphoserine. Residues 1280–1334 (VHPESSEGEEHSVVPQRHSGSGHGHGQGQGQAGHQQRESVHGQPVRPEVPTQDSS) form a Filaggrin 8 repeat. The segment covering 1300-1310 (SGHGHGQGQGQ) has biased composition (gly residues). The span at 1333–1351 (SSRQPQAGQGQPSQSGSGR) shows a compositional bias: low complexity. Ser-1356, Ser-1362, and Ser-1363 each carry phosphoserine. A compositionally biased stretch (basic and acidic residues) spans 1377–1396 (ESCHCHCHDQAGHQQRESVH). Residues 1413–1436 (PQAGPGQPSQSGSRRSPRSSPVHP) are compositionally biased toward low complexity. Phosphoserine is present on residues Ser-1438 and Ser-1439. Gly residues predominate over residues 1454-1464 (SGHGHGQGQGQ). A Filaggrin 9 repeat occupies 1474–1522 (HGQRGRPQGPTQDSSRQPQAGQGQPSQSGSGRSPRRSPVHPESSEGEEH). Residues 1487 to 1505 (SSRQPQAGQGQPSQSGSGR) show a composition bias toward low complexity. Ser-1510, Ser-1516, and Ser-1517 each carry phosphoserine. A compositionally biased stretch (gly residues) spans 1532–1544 (SGHGHGHGQGQGQ). The segment covering 1567-1585 (SSRQPQAGQGQPSQSGSGR) has biased composition (low complexity). Residues Ser-1590, Ser-1596, and Ser-1597 each carry the phosphoserine modification. Low complexity-rich tracts occupy residues 1643 to 1661 (SSRQPQAGQGQPSQSGSGR) and 1683 to 1696 (QRHSGSGHSHGQGQ). Residues 1698 to 1708 (HAEHQQRESVH) are compositionally biased toward basic and acidic residues. A Filaggrin 10 repeat occupies 1723-1756 (RQPQAGQGQPSLSGSGRSPRRSPVHPESSEGEEH). A compositionally biased stretch (low complexity) spans 1724–1739 (QPQAGQGQPSLSGSGR). Phosphoserine is present on residues Ser-1744, Ser-1750, Ser-1751, Ser-1824, Ser-1830, and Ser-1831. A compositionally biased stretch (low complexity) spans 1801–1825 (SSRQPQAGQGQPSQSGSGRSPGRSP). Basic and acidic residues predominate over residues 1829–1848 (ESSEGEEHSVVPQRHSESGH). A compositionally biased stretch (low complexity) spans 1879–1897 (SSRQPQAGQGQPSQSGSGR). A phosphoserine mark is found at Ser-1902, Ser-1908, and Ser-1909. The span at 1924–1934 (SGHGHGQGQGQ) shows a compositional bias: gly residues. The segment covering 1949-1975 (RPQGPSQDSSSQPQASQGQPSQSGSGR) has biased composition (low complexity). Phosphoserine is present on residues Ser-1980, Ser-1986, and Ser-1987. Residues 2002 to 2012 (SGHGHGQGQGQ) are compositionally biased toward gly residues. A Filaggrin 11 repeat occupies 2016–2070 (QQRESLHGQRGRSQSPFHPSHSIHWQSKCTISKKSSRLSGHYGRNHFQSTISGNQ). 3 stretches are compositionally biased toward polar residues: residues 2026–2048 (GRSQSPFHPSHSIHWQSKCTISK), 2061–2079 (HFQSTISGNQYDSSQSSRH), and 2100–2109 (LRSNSQSSIP). At Ser-2104 the chain carries Phosphoserine. One copy of the Filaggrin 12 repeat lies at 2218 to 2259 (DDSQYILFQKHLESPSFGNQSGFSPNERQLYTCNESIDSYHL).

Belongs to the S100-fused protein family. The protein in the N-terminal section; belongs to the S-100 family. Post-translationally, deiminated by PADI1, PADI2 or PADI3 in vitro. The deiminated form is degraded by calpain-1/CAPN1 more quickly and into shorter peptides than the intact protein. May be processed by calpain-1/CAPN1.

It is found in the cytoplasm. The protein resides in the cytoplasmic granule. In terms of biological role, essential for normal cell-cell adhesion in the cornified cell layers. Important for proper integrity and mechanical strength of the stratum corneum of the epidermis. The chain is Filaggrin-2 (Flg2) from Mus musculus (Mouse).